Consider the following 318-residue polypeptide: Retinol dehydrogenase 5 (318 aa).

The chain crosses the membrane as a helical span at residues 1–21 (MWLPLLLGALLWAVLWLLRDR). Residues 22–288 (QSLPASNAFV…TRYSPGWDAK (267 aa)) lie on the Lumenal side of the membrane. NADP(+) is bound at residue 32–56 (FITGCDSGFGRLLALQLDQRGFRVL). Asn-160 carries an N-linked (GlcNAc...) asparagine glycan. Residue Ser-163 participates in substrate binding. Catalysis depends on Tyr-175, which acts as the Proton acceptor. A helical membrane pass occupies residues 289 to 309 (LLWLPASYLPASLVDAVLTWV). Over 310 to 318 (LPKPAQAVY) the chain is Cytoplasmic.

It belongs to the short-chain dehydrogenases/reductases (SDR) family. As to quaternary structure, homodimer. As to expression, widely expressed. In the eye, abundant in the retinal pigment epithelium.

The protein resides in the endoplasmic reticulum membrane. The catalysed reaction is 11-cis-retinol + NAD(+) = 11-cis-retinal + NADH + H(+). It catalyses the reaction 9-cis-retinol + NAD(+) = 9-cis-retinal + NADH + H(+). It carries out the reaction 13-cis-retinol + NAD(+) = 13-cis-retinal + NADH + H(+). The enzyme catalyses androsterone + NAD(+) = 5alpha-androstan-3,17-dione + NADH + H(+). The catalysed reaction is 5alpha-androstane-3alpha,17beta-diol + NAD(+) = 17beta-hydroxy-5alpha-androstan-3-one + NADH + H(+). It participates in cofactor metabolism; retinol metabolism. With respect to regulation, inhibited by 9-cis-, 13-cis- and all-trans-retinoic acids, with the most potent inhibitor being 13-cis-retinoic acid. Weakly inhibited by oleic acid. Functionally, catalyzes the oxidation of cis-isomers of retinol, including 11-cis-, 9-cis-, and 13-cis-retinol in an NAD-dependent manner. Has no activity towards all-trans retinal. Plays a significant role in 11-cis retinol oxidation in the retinal pigment epithelium cells (RPE). Also recognizes steroids (androsterone, androstanediol) as its substrates. This chain is Retinol dehydrogenase 5, found in Homo sapiens (Human).